The sequence spans 666 residues: Calcium/calmodulin-dependent protein kinase type II subunit beta (666 aa).

One can recognise a Protein kinase domain in the interval 14-272 (YQLYEDIGKG…AHEALKHPWV (259 aa)). Residue Tyr17 is modified to Phosphotyrosine. ATP contacts are provided by residues 20–28 (IGKGAFSVV) and Lys43. Catalysis depends on Asp136, which acts as the Proton acceptor. The interval 283-292 (HRQETVECLK) is autoinhibitory domain. The residue at position 287 (Thr287) is a Phosphothreonine; by autocatalysis. A calmodulin-binding region spans residues 291-301 (LKKFNARRKLK). 2 positions are modified to phosphothreonine; by autocatalysis: Thr306 and Thr307. A disordered region spans residues 349–534 (ADGVKPQTNS…IPGPLPTPSR (186 aa)). Residues 354–369 (PQTNSTKNSAAATSPK) show a composition bias toward polar residues. Phosphoserine is present on residues Ser367, Ser394, and Ser397. Phosphothreonine occurs at positions 400 and 401. The span at 432–447 (LPCPSPAPFSPLPAPS) shows a compositional bias: pro residues. The span at 479-491 (SPALLGPLSSPSP) shows a compositional bias: low complexity. Pro residues predominate over residues 514 to 531 (PVGPPPCPSPTIPGPLPT).

Belongs to the protein kinase superfamily. CAMK Ser/Thr protein kinase family. CaMK subfamily. In terms of assembly, CAMK2 is composed of 4 different chains: alpha (CAMK2A), beta (CAMK2B), gamma (CAMK2G), and delta (CAMK2D). The different isoforms assemble into homo- or heteromultimeric holoenzymes composed of 12 subunits with two hexameric rings stacked one on top of the other. Interacts with SYNGAP1 and CAMK2N2. Interacts with MPDZ. Interacts with FOXO3. Interacts (when in a kinase inactive state not associated with calmodulin) with ARC; leading to target ARC to inactive synapses. Interacts with CAMK2N1; this interaction requires CAMK2B activation by Ca(2+). In terms of processing, autophosphorylation of Thr-287 following activation by Ca(2+)/calmodulin. Phosphorylation of Thr-287 locks the kinase into an activated state. In terms of tissue distribution, widely expressed. Expressed in adult and fetal brain. Expression is slightly lower in fetal brain. Expressed in skeletal muscle.

The protein resides in the cytoplasm. It localises to the cytoskeleton. Its subcellular location is the microtubule organizing center. It is found in the centrosome. The protein localises to the sarcoplasmic reticulum membrane. The protein resides in the synapse. It carries out the reaction L-seryl-[protein] + ATP = O-phospho-L-seryl-[protein] + ADP + H(+). It catalyses the reaction L-threonyl-[protein] + ATP = O-phospho-L-threonyl-[protein] + ADP + H(+). Its activity is regulated as follows. Activated by Ca(2+)/calmodulin. Binding of calmodulin results in conformational change that relieves intrasteric autoinhibition and allows autophosphorylation of Thr-287 which turns the kinase in a constitutively active form and confers to the kinase a Ca(2+)-independent activity. Its function is as follows. Calcium/calmodulin-dependent protein kinase that functions autonomously after Ca(2+)/calmodulin-binding and autophosphorylation, and is involved in dendritic spine and synapse formation, neuronal plasticity and regulation of sarcoplasmic reticulum Ca(2+) transport in skeletal muscle. In neurons, plays an essential structural role in the reorganization of the actin cytoskeleton during plasticity by binding and bundling actin filaments in a kinase-independent manner. This structural function is required for correct targeting of CaMK2A, which acts downstream of NMDAR to promote dendritic spine and synapse formation and maintain synaptic plasticity which enables long-term potentiation (LTP) and hippocampus-dependent learning. In developing hippocampal neurons, promotes arborization of the dendritic tree and in mature neurons, promotes dendritic remodeling. Also regulates the migration of developing neurons. Participates in the modulation of skeletal muscle function in response to exercise. In slow-twitch muscles, is involved in regulation of sarcoplasmic reticulum (SR) Ca(2+) transport and in fast-twitch muscle participates in the control of Ca(2+) release from the SR through phosphorylation of triadin, a ryanodine receptor-coupling factor, and phospholamban (PLN/PLB), an endogenous inhibitor of SERCA2A/ATP2A2. In response to interferon-gamma (IFN-gamma) stimulation, catalyzes phosphorylation of STAT1, stimulating the JAK-STAT signaling pathway. Phosphorylates reticulophagy regulator RETREG1 at 'Ser-151' under endoplasmic reticulum stress conditions which enhances RETREG1 oligomerization and its membrane scission and reticulophagy activity. In Homo sapiens (Human), this protein is Calcium/calmodulin-dependent protein kinase type II subunit beta (CAMK2B).